Reading from the N-terminus, the 656-residue chain is Macrolide export ATP-binding/permease protein MacB (656 aa).

The 239-residue stretch at 20–258 (IELAGITRSF…EPDFAPHVDR (239 aa)) folds into the ABC transporter domain. 56 to 63 (GASGSGKS) provides a ligand contact to ATP. 4 helical membrane passes run 284-304 (ALTL…LAIG), 531-551 (LTIL…IGVM), 591-611 (ALGG…IALF), and 619-639 (LLPV…FGYL).

This sequence belongs to the ABC transporter superfamily. Macrolide exporter (TC 3.A.1.122) family. Homodimer.

The protein localises to the cell inner membrane. Functionally, non-canonical ABC transporter that contains transmembrane domains (TMD), which form a pore in the inner membrane, and an ATP-binding domain (NBD), which is responsible for energy generation. Confers resistance against macrolides. In Azoarcus sp. (strain BH72), this protein is Macrolide export ATP-binding/permease protein MacB.